We begin with the raw amino-acid sequence, 468 residues long: Glutamine synthetase (468 aa).

The region spanning asparagine 13–threonine 97 is the GS beta-grasp domain. Residues proline 105 to valine 468 form the GS catalytic domain. Positions 130 and 132 each coordinate Mg(2+). Glutamate 208 contacts ATP. Positions 213 and 220 each coordinate Mg(2+). L-glutamate-binding positions include asparagine 264 to glycine 265 and glycine 265. A Mg(2+)-binding site is contributed by histidine 269. ATP is bound by residues histidine 271–serine 273 and serine 273. 3 residues coordinate L-glutamate: arginine 321, glutamate 327, and arginine 339. ATP is bound by residues arginine 339, arginine 344, and lysine 352. Residue glutamate 357 participates in Mg(2+) binding. Position 359 (arginine 359) interacts with L-glutamate. Tyrosine 397 bears the O-AMP-tyrosine mark.

The protein belongs to the glutamine synthetase family. Oligomer of 12 subunits arranged in the form of two hexameric ring. It depends on Mg(2+) as a cofactor.

Its subcellular location is the cytoplasm. It catalyses the reaction L-glutamate + NH4(+) + ATP = L-glutamine + ADP + phosphate + H(+). The activity of this enzyme could be controlled by adenylation under conditions of abundant glutamine. In terms of biological role, catalyzes the ATP-dependent biosynthesis of glutamine from glutamate and ammonia. The sequence is that of Glutamine synthetase from Vibrio alginolyticus.